An 849-amino-acid chain; its full sequence is MNNMDGSENNAKVSDSAYSNSCSNSQSRRSHSSKSTHSGSNSSGSSGYGGQPSTSSSSNDLSDQKKEKELKKKKQVETLMPDTQIEVECRPEEDVINIPSEEGGAADDVLVPSPKQTLQTDNDIADIEVAIPDTNNDKEEAIVYNTSLINPGTACPFGRPALSNCNGFSCVISMHDGVVLYATASLTSTLGFPKDMWVGRSFIDFVHPRDRNTFASQITNELAIPKIVSLTEETDQTMENPGSTMVCRIRRYRGLSCGFSVKNTTTAYLPFLLKFKFKNVNEDKGNVIYLVIQAVPFFSAFKTSNEVLAKTVSFVIRHSADGNLEYIDAESVPYLGYLPQDITNRDALLLYHPGDLGYLQEIYGSLVKEGNVTRSKTYRMMTQNGHYMKVETEWSAFINPWSKKLEFVTGKHYIIEGPANPDVFQNPENVLKLTEEQKNQAKMYRDSIIRIMKDVLTKPAEIAKQQMSKRCQDLAHFMEMLIEEQPKPVDDLRLEIQDADHSYYERDSVILGGISPHHEYDSKSSTETPLSYNQLNYNDNLQRYFNSHQSNAFVDNNLLPSRNPLYLSAPHFSESIKNVPSAMEYSGDVIDLTGPGETSGVIVFNKSPTMGLKTGKPIRLTESSLTKHNAEMEKELMKIHREHRCYSKGDRVKVSNEARQKKKEHLARCNAGFQTISAANNTPSVYEKPHNLKRSSKQMESEPIANKHHCPSSRQFRRKQTTCSGGFAQPPSATNPVSTSSQWSSSPVNNVNPFILGVRMQPPMPILSPLPVVSGMFPMYYTPVTATVTTSEGRPSEPNYHRNNMNNNQFQQPLGNSRLPTTICVIQCGTSRIIHSFRGTRTTGGTRYT.

Residues 1-13 show a composition bias toward polar residues; that stretch reads MNNMDGSENNAKV. The interval 1–79 is disordered; the sequence is MNNMDGSENN…LKKKKQVETL (79 aa). 2 stretches are compositionally biased toward low complexity: residues 14–27 and 35–58; these read SDSA…NSQS and STHS…SSSS. Residues 63–74 carry the Nuclear localization signal motif; that stretch reads DQKKEKELKKKK. PAS domains follow at residues 166–296 and 314–416; these read NGFS…QAVP and FVIR…YIIE. The disordered stretch occupies residues 680–746; it reads NNTPSVYEKP…VSTSSQWSSS (67 aa). The segment covering 706-720 has biased composition (basic residues); that stretch reads NKHHCPSSRQFRRKQ. Residues 735-746 are compositionally biased toward low complexity; it reads NPVSTSSQWSSS.

Forms a heterodimer with timeless (TIM); the complex then translocates into the nucleus. Phosphorylated with a circadian rhythmicity.

The protein resides in the nucleus. Its function is as follows. Involved in the generation of biological rhythms. The biological cycle depends on the rhythmic formation and nuclear localization of the tim-per complex. Light induces the degradation of tim, which promotes elimination of per. Nuclear activity of the heterodimer coordinatively regulates per and tim transcription negative feedback loop. Behaves as a negative element in circadian transcriptional loop. Does not appear to bind DNA, suggesting indirect transcriptional inhibition. Expression exhibits prominent circadian variation in adult heads and in particular in the photoreceptor nuclei. The chain is Period circadian protein (per) from Antheraea pernyi (Chinese oak silk moth).